The primary structure comprises 600 residues: Probable tripeptidyl-peptidase SED4 (600 aa).

Positions 1–22 (MVSFTLRAIGACLIGLPALITA) are cleaved as a signal peptide. A propeptide spans 23-202 (APTSHVSNGF…SVFTSDLEMT (180 aa)) (removed in mature form). N-linked (GlcNAc...) asparagine glycans are attached at residues Asn-210 and Asn-281. A Peptidase S53 domain is found at 212–600 (TITPDCIREL…FEKLSKLVLI (389 aa)). Active-site charge relay system residues include Glu-288 and Asp-292. 2 N-linked (GlcNAc...) asparagine glycosylation sites follow: Asn-323 and Asn-404. Ser-504 acts as the Charge relay system in catalysis. Ca(2+) contacts are provided by Asp-546, Ile-547, Gly-579, and Asp-581.

It depends on Ca(2+) as a cofactor.

Its subcellular location is the secreted. The protein localises to the extracellular space. It carries out the reaction Release of an N-terminal tripeptide from a polypeptide.. Secreted tripeptidyl-peptidase which degrades proteins at acidic pHs and is involved in virulence. This is Probable tripeptidyl-peptidase SED4 (SED4) from Trichophyton verrucosum (strain HKI 0517).